The chain runs to 535 residues: CTP synthase (535 aa).

Residues 1–268 (MSTKYIFVTG…DQIVCDHLKL (268 aa)) are amidoligase domain. Position 14 (Ser14) interacts with CTP. UTP is bound at residue Ser14. Residue 15-20 (SMGKGI) coordinates ATP. Tyr55 provides a ligand contact to L-glutamine. ATP is bound at residue Asp72. Positions 72 and 142 each coordinate Mg(2+). Residues 149-151 (DME), 189-194 (KTKIAQ), and Lys225 each bind CTP. Residues 189–194 (KTKIAQ) and Lys225 contribute to the UTP site. Val243 contributes to the ATP binding site. A Glutamine amidotransferase type-1 domain is found at 293–535 (KIALVGKYVE…FIRVAVENSK (243 aa)). Gly355 lines the L-glutamine pocket. Cys382 (nucleophile; for glutamine hydrolysis) is an active-site residue. L-glutamine-binding positions include 383–386 (LGMQ), Glu406, and Arg464. Residues His509 and Glu511 contribute to the active site.

The protein belongs to the CTP synthase family. Homotetramer. In contrast to E.coli CTP synthase, remains a tetramer at dilute enzyme concentrations even in the absence of Mg(2+), ATP and UTP.

It carries out the reaction UTP + L-glutamine + ATP + H2O = CTP + L-glutamate + ADP + phosphate + 2 H(+). The catalysed reaction is L-glutamine + H2O = L-glutamate + NH4(+). The enzyme catalyses UTP + NH4(+) + ATP = CTP + ADP + phosphate + 2 H(+). Its pathway is pyrimidine metabolism; CTP biosynthesis via de novo pathway; CTP from UDP: step 2/2. With respect to regulation, allosterically activated by GTP, when glutamine is the substrate. GTP has no effect on the reaction when ammonia is the substrate. The allosteric effector GTP functions by stabilizing the protein conformation that binds the tetrahedral intermediate(s) formed during glutamine hydrolysis. Also activated by magnesium. Allosterically inhibited by CTP. In terms of biological role, catalyzes the ATP-dependent amination of UTP to CTP with either L-glutamine or ammonia as the source of nitrogen. Is essential for the synthesis of CTP de novo. Contrary to other bacterial CTP synthases, the lactococcal enzyme is also able to convert dUTP to dCTP, but this reaction may not play a significant physiological role. Regulates intracellular CTP levels through interactions with the four ribonucleotide triphosphates. The chain is CTP synthase from Lactococcus lactis subsp. cremoris (strain MG1363).